The chain runs to 339 residues: STEAP1 protein (339 aa).

2 consecutive transmembrane segments (helical) span residues 71 to 91 (WHLP…YTLL) and 119 to 139 (PMVS…AAIV). The region spanning 118–265 (LPMVSITLLA…KLGIVSLLLG (148 aa)) is the Ferric oxidoreductase domain. Residues glutamine 140 and arginine 161 each contribute to the FAD site. Transmembrane regions (helical) follow at residues 164-184 (FGLL…SYPM) and 218-238 (IYVS…VTSI). Histidine 175 provides a ligand contact to heme b. Positions 237 and 254 each coordinate FAD. A run of 2 helical transmembrane segments spans residues 258–278 (GIVS…NKWI) and 291–311 (FMIA…LFLP). Histidine 268 lines the heme b pocket.

Belongs to the STEAP family. As to quaternary structure, homotrimer. The cofactor is FAD. It depends on heme b as a cofactor. In terms of tissue distribution, ubiquitously expressed. Highly expressed in prostate tumors.

The protein resides in the endosome membrane. Its subcellular location is the cell membrane. In terms of biological role, does not function as a metalloreductase due to the absence of binding sites for the electron-donating substrate NADPH. Promotes Fe(3+) reduction when fused to the NADPH-binding domain of STEAP4. In Homo sapiens (Human), this protein is STEAP1 protein (STEAP1).